A 151-amino-acid polypeptide reads, in one-letter code: Large ribosomal subunit protein bL9 (151 aa).

The protein belongs to the bacterial ribosomal protein bL9 family.

In terms of biological role, binds to the 23S rRNA. The chain is Large ribosomal subunit protein bL9 from Chlorobium phaeobacteroides (strain DSM 266 / SMG 266 / 2430).